Consider the following 469-residue polypeptide: Ribulose bisphosphate carboxylase large chain (469 aa).

Lys-7 is modified (N6,N6,N6-trimethyllysine). The substrate site is built by Asn-116 and Thr-166. The Proton acceptor role is filled by Lys-168. Residue Lys-170 participates in substrate binding. Residues Lys-194, Asp-196, and Glu-197 each coordinate Mg(2+). Lys-194 is modified (N6-carboxylysine). His-287 serves as the catalytic Proton acceptor. Substrate contacts are provided by Arg-288, His-320, and Ser-372.

This sequence belongs to the RuBisCO large chain family. Type I subfamily. In terms of assembly, heterohexadecamer of 8 large chains and 8 small chains; disulfide-linked. The disulfide link is formed within the large subunit homodimers. It depends on Mg(2+) as a cofactor. The disulfide bond which can form in the large chain dimeric partners within the hexadecamer appears to be associated with oxidative stress and protein turnover.

The protein resides in the plastid. It is found in the chloroplast. It carries out the reaction 2 (2R)-3-phosphoglycerate + 2 H(+) = D-ribulose 1,5-bisphosphate + CO2 + H2O. The enzyme catalyses D-ribulose 1,5-bisphosphate + O2 = 2-phosphoglycolate + (2R)-3-phosphoglycerate + 2 H(+). In terms of biological role, ruBisCO catalyzes two reactions: the carboxylation of D-ribulose 1,5-bisphosphate, the primary event in carbon dioxide fixation, as well as the oxidative fragmentation of the pentose substrate in the photorespiration process. Both reactions occur simultaneously and in competition at the same active site. This Pachira aquatica (Guiana chestnut) protein is Ribulose bisphosphate carboxylase large chain.